A 2898-amino-acid polypeptide reads, in one-letter code: Pericentrin (2898 aa).

The disordered stretch occupies residues 1-117 (MEDEQEQRRR…QPPPPQTAHS (117 aa)). Positions 34 to 44 (SKKKTAKRKGS) are enriched in basic residues. Residue Ser44 is modified to Phosphoserine. Coiled coils occupy residues 127–343 (LNNM…IRLL) and 382–434 (AQQQ…DSLE). Residues 429–460 (REDSLESTEISSSCVLPEETSGREGKEPPDPL) form a disordered region. The span at 448-457 (TSGREGKEPP) shows a compositional bias: basic and acidic residues. Coiled-coil stretches lie at residues 468 to 527 (KVQE…LREK), 611 to 696 (CALQ…LETH), 727 to 787 (VADV…SLRM), and 872 to 939 (SQDQ…LRRL). At Ser1022 the chain carries Phosphoserine. 3 coiled-coil regions span residues 1069–1383 (EREF…QENM), 1429–1482 (NEVV…SLMG), and 1529–1593 (QLLA…AKEA). Ser1437 is subject to Phosphoserine. Disordered regions lie at residues 1745 to 1786 (VASR…DDVL), 1815 to 1880 (TQEK…PLTP), and 1958 to 1979 (TSPS…GPDI). Polar residues-rich tracts occupy residues 1747-1766 (SRDT…SENG) and 1817-1834 (EKLT…SGHS). The interval 1801–1822 (NQDLLVQVEMPDFPTQEKLTSQ) is interaction with CDK5RAP2. A phosphoserine mark is found at Ser1828, Ser1859, Ser1860, and Ser1959. The segment covering 1963-1976 (ELARRSDGSRKSDG) has biased composition (basic and acidic residues). Ser1987 is modified (phosphoserine). Positions 2046 to 2055 (SESQDPSSAL) are enriched in polar residues. A disordered region spans residues 2046-2088 (SESQDPSSALNKGEPRDPLDGFPRDSQALSEVTTDKGEKESLE). Basic and acidic residues-rich tracts occupy residues 2058 to 2068 (GEPRDPLDGFP) and 2078 to 2088 (TTDKGEKESLE). Position 2128 is a phosphoserine (Ser2128). Coiled-coil stretches lie at residues 2211 to 2403 (KVEQ…EALQ) and 2429 to 2590 (HALL…ELSM). Disordered stretches follow at residues 2509 to 2532 (VSGG…QFQE) and 2653 to 2684 (NRQS…QTTS). An interaction with NEK2 region spans residues 2545–2810 (LCAAGLLTSF…SQRQRSPSGP (266 aa)). A compositionally biased stretch (polar residues) spans 2653–2671 (NRQSKSSLKQDGTDLQSSL). The calmodulin-binding stretch occupies residues 2758–2771 (KFRTAVRVVIAVLR). Residues 2787–2898 (ALVHPKSTRH…QKSCHQKIKQ (112 aa)) are disordered. Over residues 2792 to 2802 (KSTRHGHRTSQ) the composition is skewed to basic residues. The segment covering 2845–2860 (TSTPSSRLERSLTASQ) has biased composition (polar residues). Basic and acidic residues predominate over residues 2861 to 2874 (DPEHSLTEYIHHLE). Phosphoserine is present on Ser2865.

As to quaternary structure, interacts with DISC1 and PCM1. Binds calmodulin. Interacts with CEP131. Interacts with CDK5RAP2; the interaction is leading to centrosomal localization of PCNT and CDK5RAP2. Interacts with CHD3. Interacts with CHD4; the interaction regulates centrosome integrity. Interacts with NEK2. Interacts with CCDC13. Interacts with CEP68. Interacts with ATF5; the ATF5:PCNT:polyglutamylated tubulin (PGT) tripartite unites the mother centriole and the pericentriolar material (PCM) in the centrosome. Post-translationally, cleaved during mitotis which leads to removal of CDK5RAP2 from the centrosome and promotes centriole disengagement and subsequent centriole separation. The C-terminal fragment is rapidly degraded following cleavage. Ubiquitinated by TRIM43; leading to proteasomal degradation. Expressed in heart and lung (at protein level). Expressed in kidney, thymus, liver, brain, muscle, testis, spleen, lung and heart.

The protein localises to the cytoplasm. Its subcellular location is the cytoskeleton. It localises to the microtubule organizing center. The protein resides in the centrosome. Integral component of the filamentous matrix of the centrosome involved in the initial establishment of organized microtubule arrays in both mitosis and meiosis. Plays a role, together with DISC1, in the microtubule network formation. Is an integral component of the pericentriolar material (PCM). May play an important role in preventing premature centrosome splitting during interphase by inhibiting NEK2 kinase activity at the centrosome. This Mus musculus (Mouse) protein is Pericentrin (Pcnt).